Here is a 154-residue protein sequence, read N- to C-terminus: MRLKLLWVGKTQESWVRTGIEEYAGRIRRYLPLEILEAREEKGAQAAAMRERECERLAKLIPKGGRLVLLDERGEAMTSPELASFLSKNRDQGTQDLVFAIGGAYGFTDQFRSQAFKSISLSRMTLTHQMVRVFLLEQIYRGFTIINCEPYHHE.

Residues Leu-70, Gly-102, and 121 to 126 (LSRMTL) contribute to the S-adenosyl-L-methionine site.

It belongs to the RNA methyltransferase RlmH family. As to quaternary structure, homodimer.

It is found in the cytoplasm. The enzyme catalyses pseudouridine(1915) in 23S rRNA + S-adenosyl-L-methionine = N(3)-methylpseudouridine(1915) in 23S rRNA + S-adenosyl-L-homocysteine + H(+). Its function is as follows. Specifically methylates the pseudouridine at position 1915 (m3Psi1915) in 23S rRNA. In Citrifermentans bemidjiense (strain ATCC BAA-1014 / DSM 16622 / JCM 12645 / Bem) (Geobacter bemidjiensis), this protein is Ribosomal RNA large subunit methyltransferase H.